The primary structure comprises 229 residues: MATTVVLCSGGLDSSVIAKWAVEELGGRVICLFVDYGQRNAPFERRAAERIAEAVGAEFETVGTFWLRRLCPDNPMFAGRLPREAGTEDLSANWLPARNWNLLGVAAALCDHLYLEGEDDEFHIVWGINAEEAERFPDNTKEFADAVAEALKRGLPSRPRLHSPLAELYKPGIVRLGSELGAPMELSVSCYNPIWEDDTPVHCGECEACYHRKRAFERAGIEDPTEYLE.

8–18 (CSGGLDSSVIA) serves as a coordination point for ATP. Zn(2+) contacts are provided by cysteine 190, cysteine 203, cysteine 206, and cysteine 209.

The protein belongs to the QueC family. Zn(2+) is required as a cofactor.

The enzyme catalyses 7-carboxy-7-deazaguanine + NH4(+) + ATP = 7-cyano-7-deazaguanine + ADP + phosphate + H2O + H(+). The protein operates within purine metabolism; 7-cyano-7-deazaguanine biosynthesis. Catalyzes the ATP-dependent conversion of 7-carboxy-7-deazaguanine (CDG) to 7-cyano-7-deazaguanine (preQ(0)). This is 7-cyano-7-deazaguanine synthase from Methanopyrus kandleri (strain AV19 / DSM 6324 / JCM 9639 / NBRC 100938).